The sequence spans 357 residues: Isopentenyl-diphosphate delta-isomerase (357 aa).

Substrate is bound at residue 12–13 (RK). FMN-binding positions include serine 70, 71–73 (SMT), serine 101, and asparagine 130. Residue 101-103 (SMR) coordinates substrate. Residue glutamine 165 coordinates substrate. Glutamate 166 contacts Mg(2+). FMN-binding positions include lysine 197, 289 to 291 (GIR), and 310 to 311 (AQ).

The protein belongs to the IPP isomerase type 2 family. As to quaternary structure, homooctamer. Dimer of tetramers. FMN serves as cofactor. NADPH is required as a cofactor. It depends on Mg(2+) as a cofactor.

It is found in the cytoplasm. It carries out the reaction isopentenyl diphosphate = dimethylallyl diphosphate. Functionally, involved in the biosynthesis of isoprenoids. Catalyzes the 1,3-allylic rearrangement of the homoallylic substrate isopentenyl (IPP) to its allylic isomer, dimethylallyl diphosphate (DMAPP). The sequence is that of Isopentenyl-diphosphate delta-isomerase from Chlorobaculum parvum (strain DSM 263 / NCIMB 8327) (Chlorobium vibrioforme subsp. thiosulfatophilum).